Here is a 64-residue protein sequence, read N- to C-terminus: Large ribosomal subunit protein uL29 (64 aa).

Belongs to the universal ribosomal protein uL29 family.

The polypeptide is Large ribosomal subunit protein uL29 (Polynucleobacter necessarius subsp. necessarius (strain STIR1)).